The following is a 274-amino-acid chain: Photosystem II extrinsic protein O (274 aa).

The N-terminal stretch at 1 to 28 (MRFRPSIVALLSVCFGLLTFLYSGSAFA) is a signal peptide.

This sequence belongs to the PsbO family. As to quaternary structure, PSII is composed of 1 copy each of membrane proteins PsbA, PsbB, PsbC, PsbD, PsbE, PsbF, PsbH, PsbI, PsbJ, PsbK, PsbL, PsbM, PsbT, PsbX, PsbY, PsbZ, Psb30/Ycf12, peripheral proteins PsbO, CyanoQ (PsbQ), PsbU, PsbV and a large number of cofactors. It forms dimeric complexes. Contacts PsbQ.

It localises to the cellular thylakoid membrane. In terms of biological role, one of the extrinsic, lumenal subunits of photosystem II (PSII), which stabilize and protect the oxygen-evolving complex. PSII is a light-driven water plastoquinone oxidoreductase, using light energy to abstract electrons from H(2)O, generating a proton gradient subsequently used for ATP formation. Required for dimerization of PSII and for binding of PsbQ to PSII. This is Photosystem II extrinsic protein O from Synechocystis sp. (strain ATCC 27184 / PCC 6803 / Kazusa).